Reading from the N-terminus, the 81-residue chain is MKTLLLTLVVVTIVCLDLGYTLKCNKLVPLFYKTCPAGKNLCYKMFMVSNLTVPVKRGCIDVCPKNSALVKYVCCNTDRCN.

An N-terminal signal peptide occupies residues 1–21 (MKTLLLTLVVVTIVCLDLGYT). 4 cysteine pairs are disulfide-bonded: C24–C42, C35–C59, C63–C74, and C75–C80.

It belongs to the three-finger toxin family. Short-chain subfamily. Type IA cytotoxin sub-subfamily. As to quaternary structure, monomer in solution; Homodimer and oligomer in the presence of negatively charged lipids forming a pore with a size ranging between 20 and 30 Angstroms. In terms of tissue distribution, expressed by the venom gland.

It localises to the secreted. The protein localises to the target cell membrane. Basic protein that binds to cell membrane and depolarizes cardiomyocytes. It also shows lytic activities, but 2-fold less important than that of CTX-A4. It binds to the integrin alpha-V/beta-3 (ITGAV/ITGB3) with a moderate affinity. It may interact with sulfatides in the cell membrane which induces pore formation and cell internalization and is responsible for cytotoxicity in cardiomyocytes. It may also target the mitochondrial membrane and induce mitochondrial swelling and fragmentation. In Naja atra (Chinese cobra), this protein is Cytotoxin 2.